Consider the following 570-residue polypeptide: Urease subunit alpha (570 aa).

The Urease domain maps to 131-570 (GGMDSHIHFI…LPMAQRYFLF (440 aa)). Positions 136, 138, and 219 each coordinate Ni(2+). K219 is modified (N6-carboxylysine). A substrate-binding site is contributed by H221. Ni(2+) contacts are provided by H248 and H274. Catalysis depends on H322, which acts as the Proton donor. D362 provides a ligand contact to Ni(2+).

The protein belongs to the metallo-dependent hydrolases superfamily. Urease alpha subunit family. Heterotrimer of UreA (gamma), UreB (beta) and UreC (alpha) subunits. Three heterotrimers associate to form the active enzyme. Ni cation serves as cofactor. Carboxylation allows a single lysine to coordinate two nickel ions.

It localises to the cytoplasm. The enzyme catalyses urea + 2 H2O + H(+) = hydrogencarbonate + 2 NH4(+). It participates in nitrogen metabolism; urea degradation; CO(2) and NH(3) from urea (urease route): step 1/1. In Rhizobium leguminosarum bv. trifolii (strain WSM2304), this protein is Urease subunit alpha.